The following is a 156-amino-acid chain: SsrA-binding protein (156 aa).

Belongs to the SmpB family.

Its subcellular location is the cytoplasm. In terms of biological role, required for rescue of stalled ribosomes mediated by trans-translation. Binds to transfer-messenger RNA (tmRNA), required for stable association of tmRNA with ribosomes. tmRNA and SmpB together mimic tRNA shape, replacing the anticodon stem-loop with SmpB. tmRNA is encoded by the ssrA gene; the 2 termini fold to resemble tRNA(Ala) and it encodes a 'tag peptide', a short internal open reading frame. During trans-translation Ala-aminoacylated tmRNA acts like a tRNA, entering the A-site of stalled ribosomes, displacing the stalled mRNA. The ribosome then switches to translate the ORF on the tmRNA; the nascent peptide is terminated with the 'tag peptide' encoded by the tmRNA and targeted for degradation. The ribosome is freed to recommence translation, which seems to be the essential function of trans-translation. The sequence is that of SsrA-binding protein from Bacillus pumilus (strain SAFR-032).